We begin with the raw amino-acid sequence, 192 residues long: MLGRLTGLLAEKSPPQVLIDVGGVGYEVDVPMSSFFNLPAIGEKVTLLTHFVVREDAQVLFGFLTAPERETFRMLIKISGVGPRTALSILSGLTVGDLAQAVTAQDASRLVKVPGIGKKTAERLLLELKGKLGADLGPAIGGKPASDAQADILQALIALGYSEREAQAAVKALPAEVGVSDGIKLALKALAR.

The interval 1–64 (MLGRLTGLLA…EDAQVLFGFL (64 aa)) is domain I. The interval 65–139 (TAPERETFRM…GKLGADLGPA (75 aa)) is domain II. The interval 139-143 (AIGGK) is flexible linker. The tract at residues 144–192 (PASDAQADILQALIALGYSEREAQAAVKALPAEVGVSDGIKLALKALAR) is domain III.

This sequence belongs to the RuvA family. As to quaternary structure, homotetramer. Forms an RuvA(8)-RuvB(12)-Holliday junction (HJ) complex. HJ DNA is sandwiched between 2 RuvA tetramers; dsDNA enters through RuvA and exits via RuvB. An RuvB hexamer assembles on each DNA strand where it exits the tetramer. Each RuvB hexamer is contacted by two RuvA subunits (via domain III) on 2 adjacent RuvB subunits; this complex drives branch migration. In the full resolvosome a probable DNA-RuvA(4)-RuvB(12)-RuvC(2) complex forms which resolves the HJ.

It is found in the cytoplasm. Its function is as follows. The RuvA-RuvB-RuvC complex processes Holliday junction (HJ) DNA during genetic recombination and DNA repair, while the RuvA-RuvB complex plays an important role in the rescue of blocked DNA replication forks via replication fork reversal (RFR). RuvA specifically binds to HJ cruciform DNA, conferring on it an open structure. The RuvB hexamer acts as an ATP-dependent pump, pulling dsDNA into and through the RuvAB complex. HJ branch migration allows RuvC to scan DNA until it finds its consensus sequence, where it cleaves and resolves the cruciform DNA. This is Holliday junction branch migration complex subunit RuvA from Methylibium petroleiphilum (strain ATCC BAA-1232 / LMG 22953 / PM1).